Here is a 346-residue protein sequence, read N- to C-terminus: MSDNIRLTQFSHGAGUGCKISPKVLGTILQSELDKFVDPKLLVGNETADDAAVYDIGNGLAIISTTDFFMPIVDDPFDFGRIAATNALSDIFAMGGKPLMAIAILGFPIDKLPAEVAQKIIEGGRFACQQAGIVLAGGHSIHSMEPIFGLAVTGMAAIEHIKRNASATAGCELFLTKPLGIGILTTAEKRGLLTLPHQHLVRDLMCQLNTIGTLLAPLPEMTAMTDITGFGLLGHLSEICQASNVRAEINSHAVKVIDGVEEYVEQGMIPGGTQRNFESYANLVSPLSDRQKAILCDQQTSGGLLIAVEPQAVEKIQQIAQQIGSMLFHIGKLFDRAPDKALIEVN.

U16 is a catalytic residue. A non-standard amino acid (selenocysteine) is located at residue U16. Residues K19 and 47–49 each bind ATP; that span reads TAD. D50 lines the Mg(2+) pocket. Residues D67, D90, and 138-140 each bind ATP; that span reads GHS. D90 contributes to the Mg(2+) binding site. D226 provides a ligand contact to Mg(2+).

It belongs to the selenophosphate synthase 1 family. Class I subfamily. As to quaternary structure, homodimer. It depends on Mg(2+) as a cofactor.

It catalyses the reaction hydrogenselenide + ATP + H2O = selenophosphate + AMP + phosphate + 2 H(+). Its function is as follows. Synthesizes selenophosphate from selenide and ATP. The sequence is that of Selenide, water dikinase from Haemophilus ducreyi (strain 35000HP / ATCC 700724).